A 357-amino-acid polypeptide reads, in one-letter code: Phosphoribosylformylglycinamidine cyclo-ligase (357 aa).

This sequence belongs to the AIR synthase family.

The protein resides in the cytoplasm. The enzyme catalyses 2-formamido-N(1)-(5-O-phospho-beta-D-ribosyl)acetamidine + ATP = 5-amino-1-(5-phospho-beta-D-ribosyl)imidazole + ADP + phosphate + H(+). It participates in purine metabolism; IMP biosynthesis via de novo pathway; 5-amino-1-(5-phospho-D-ribosyl)imidazole from N(2)-formyl-N(1)-(5-phospho-D-ribosyl)glycinamide: step 2/2. In Rhizobium etli (strain ATCC 51251 / DSM 11541 / JCM 21823 / NBRC 15573 / CFN 42), this protein is Phosphoribosylformylglycinamidine cyclo-ligase.